The primary structure comprises 381 residues: Sulfofructose kinase (381 aa).

ATP is bound by residues Gly-10, 72-73 (RY), and 100-103 (GNGT). Asn-101 lines the Mg(2+) pocket. Asp-131 functions as the Proton acceptor in the catalytic mechanism.

It belongs to the phosphofructokinase type A (PFKA) family. The cofactor is Mg(2+).

It catalyses the reaction 6-deoxy-6-sulfo-D-fructose + ATP = 6-deoxy-6-sulfo-D-fructose 1-phosphate + ADP + H(+). Functionally, part of the sulfo-EMP2 pathway, a D-sulfoquinovose degradation pathway that produces sulfolactate (SL). Phosphorylates 6-deoxy-6-sulfo-D-fructose (SF) to 6-deoxy-6-sulfo-D-fructose 1-phosphate (SFP). The sequence is that of Sulfofructose kinase from Alkalicoccus urumqiensis (Bacillus urumqiensis).